A 338-amino-acid polypeptide reads, in one-letter code: Glycerol-3-phosphate dehydrogenase [NAD(P)+] (338 aa).

The NADPH site is built by serine 14, tyrosine 15, histidine 35, and lysine 109. Sn-glycerol 3-phosphate-binding residues include lysine 109, glycine 138, and threonine 140. Alanine 142 is a binding site for NADPH. Positions 194, 247, 257, 258, and 259 each coordinate sn-glycerol 3-phosphate. Lysine 194 functions as the Proton acceptor in the catalytic mechanism. Residue arginine 258 participates in NADPH binding. NADPH contacts are provided by valine 282 and glutamate 284.

This sequence belongs to the NAD-dependent glycerol-3-phosphate dehydrogenase family.

The protein resides in the cytoplasm. The enzyme catalyses sn-glycerol 3-phosphate + NAD(+) = dihydroxyacetone phosphate + NADH + H(+). It catalyses the reaction sn-glycerol 3-phosphate + NADP(+) = dihydroxyacetone phosphate + NADPH + H(+). Its pathway is membrane lipid metabolism; glycerophospholipid metabolism. Its function is as follows. Catalyzes the reduction of the glycolytic intermediate dihydroxyacetone phosphate (DHAP) to sn-glycerol 3-phosphate (G3P), the key precursor for phospholipid synthesis. The protein is Glycerol-3-phosphate dehydrogenase [NAD(P)+] of Shewanella oneidensis (strain ATCC 700550 / JCM 31522 / CIP 106686 / LMG 19005 / NCIMB 14063 / MR-1).